The following is a 674-amino-acid chain: MAVTLDSPSPARKRRPLVVGSFESPKLSSDTKLTRSLFLASHEISSMQPLPFILRRNSLSLIRKVKILASVFDELLLPRSQLVVYSQSAHLCFEEMQIVMQRIKSLIDDCSRVSKLWLLLQIDIVAFNFHELVTDLSTVLDILPLHDFDLSDDAQDLISLLTKQCSDSVQFVDARDVALRRKVTDTIAGIKHQISPDHSTLIKIFNDLGLSDSASLTDEIQRLEDEIQDQIDDRSKSAAASLIGLVRYSKCVLYGPSTPAPDFRRHQSLSDANIPADFRCPITLELMRDPVVVATGQTYDRESIDLWIQSGHNTCPKTGQVLKHTSLVPNRALKNLIVLWCRDQKIPFELYGDGGGEPAPCKEAVEFTKMMVSFLIEKLSVADSNGVVFELRALAKSDTVARACIAEAGAIPKLVRYLATECPSLQINAVTTILNLSILEQNKTRIMETDGALNGVIEVLRSGATWEAKANAAATLFSLAGVSAYRRRLGRKARVVSGLVDLAKQGPTSSKRDALVAILNLVAERENVGRFVEAGVMGAAGDAFQELPEEAVAVVEAVVRRGGLMAVSAAFSLIRLLGEVMREGADTTRESAAATLVTMCRKGGSELVAEMAAIPGIERVIWEMIGAGTARGGRKAASLMRYLRRWAAGDTHNTAAETQSIVVPTPSRIFSPVL.

Positions 273 to 347 constitute a U-box domain; sequence NIPADFRCPI…VLWCRDQKIP (75 aa). ARM repeat units follow at residues 399–438, 441–481, and 484–523; these read TVAR…NLSI, QNKT…SLAG, and AYRR…NLVA.

The catalysed reaction is S-ubiquitinyl-[E2 ubiquitin-conjugating enzyme]-L-cysteine + [acceptor protein]-L-lysine = [E2 ubiquitin-conjugating enzyme]-L-cysteine + N(6)-ubiquitinyl-[acceptor protein]-L-lysine.. The protein operates within protein modification; protein ubiquitination. Functions as an E3 ubiquitin ligase. This is U-box domain-containing protein 16 (PUB16) from Arabidopsis thaliana (Mouse-ear cress).